We begin with the raw amino-acid sequence, 193 residues long: Ion-translocating oxidoreductase complex subunit A (193 aa).

The next 6 helical transmembrane spans lie at 5 to 25, 39 to 59, 62 to 82, 102 to 122, 134 to 154, and 171 to 191; these read LLLL…FLGL, MGMG…AWAV, FILV…LVIA, LLGI…VALL, AVYG…FAAI, and SIAL…SGLV.

This sequence belongs to the NqrDE/RnfAE family. The complex is composed of six subunits: RnfA, RnfB, RnfC, RnfD, RnfE and RnfG.

Its subcellular location is the cell inner membrane. Functionally, part of a membrane-bound complex that couples electron transfer with translocation of ions across the membrane. The polypeptide is Ion-translocating oxidoreductase complex subunit A (Edwardsiella ictaluri (strain 93-146)).